The chain runs to 167 residues: UPF0262 protein Nwi_0248 (167 aa).

It belongs to the UPF0262 family.

This chain is UPF0262 protein Nwi_0248, found in Nitrobacter winogradskyi (strain ATCC 25391 / DSM 10237 / CIP 104748 / NCIMB 11846 / Nb-255).